A 213-amino-acid polypeptide reads, in one-letter code: Peptidyl-prolyl cis-trans isomerase B (213 aa).

Residues 1 to 23 (MAVLRVLCGLLLVSILFLGFVLS) form the signal peptide. The region spanning 35–197 (FFDIEVDEQP…KSVKIANCGH (163 aa)) is the PPIase cyclophilin-type domain. The Prevents secretion from ER signature appears at 210 to 213 (DAAE).

Belongs to the cyclophilin-type PPIase family. PPIase B subfamily.

Its subcellular location is the endoplasmic reticulum lumen. The catalysed reaction is [protein]-peptidylproline (omega=180) = [protein]-peptidylproline (omega=0). Inhibited by cyclosporin A (CsA). Functionally, PPIases accelerate the folding of proteins. It catalyzes the cis-trans isomerization of proline imidic peptide bonds in oligopeptides. The sequence is that of Peptidyl-prolyl cis-trans isomerase B from Schistosoma japonicum (Blood fluke).